A 506-amino-acid polypeptide reads, in one-letter code: Zinc finger and SCAN domain containing protein 4C (506 aa).

The interval 1–24 is disordered; it reads MASQQAPAKDLQTNNLEFTPTDSS. Residues 37–119 form the SCAN box domain; it reads SAQLNFSPSN…RFMESLTDEC (83 aa). C2H2-type zinc fingers lie at residues 395–417, 424–446, 452–474, and 480–503; these read YKCE…QRTH, LLCV…EIIH, FKCS…EMIH, and YVCS…RNYH.

Embryonic stem (ES) cell-specific. Expressed in only 5% of ES cells at a given time, but nearly all ES cells express it at least once during 9 passages.

The protein resides in the nucleus. Its subcellular location is the chromosome. It is found in the telomere. Its function is as follows. Embryonic stem (ES) cell-specific transcription factor required to regulate ES cell pluripotency. Binds telomeres and plays a key role in genomic stability in ES cells by regulating telomere elongation. Acts as an activator of spontaneous telomere sister chromatid exchange (T-SCE) and telomere elongation in undifferentiated ES cells. The sequence is that of Zinc finger and SCAN domain containing protein 4C (Zscan4c) from Mus musculus (Mouse).